The sequence spans 100 residues: Aspartyl/glutamyl-tRNA(Asn/Gln) amidotransferase subunit C (100 aa).

This sequence belongs to the GatC family. As to quaternary structure, heterotrimer of A, B and C subunits.

It catalyses the reaction L-glutamyl-tRNA(Gln) + L-glutamine + ATP + H2O = L-glutaminyl-tRNA(Gln) + L-glutamate + ADP + phosphate + H(+). The catalysed reaction is L-aspartyl-tRNA(Asn) + L-glutamine + ATP + H2O = L-asparaginyl-tRNA(Asn) + L-glutamate + ADP + phosphate + 2 H(+). In terms of biological role, allows the formation of correctly charged Asn-tRNA(Asn) or Gln-tRNA(Gln) through the transamidation of misacylated Asp-tRNA(Asn) or Glu-tRNA(Gln) in organisms which lack either or both of asparaginyl-tRNA or glutaminyl-tRNA synthetases. The reaction takes place in the presence of glutamine and ATP through an activated phospho-Asp-tRNA(Asn) or phospho-Glu-tRNA(Gln). The protein is Aspartyl/glutamyl-tRNA(Asn/Gln) amidotransferase subunit C of Rickettsia typhi (strain ATCC VR-144 / Wilmington).